The following is a 507-amino-acid chain: Glutamate--tRNA ligase (507 aa).

Positions 14–24 (PSPTGYLHIGG) match the 'HIGH' region motif. Residues 261–265 (KLSKR) carry the 'KMSKS' region motif. Lys264 provides a ligand contact to ATP.

It belongs to the class-I aminoacyl-tRNA synthetase family. Glutamate--tRNA ligase type 1 subfamily. In terms of assembly, monomer.

Its subcellular location is the cytoplasm. The enzyme catalyses tRNA(Glu) + L-glutamate + ATP = L-glutamyl-tRNA(Glu) + AMP + diphosphate. Its function is as follows. Catalyzes the attachment of glutamate to tRNA(Glu) in a two-step reaction: glutamate is first activated by ATP to form Glu-AMP and then transferred to the acceptor end of tRNA(Glu). The polypeptide is Glutamate--tRNA ligase (Roseiflexus castenholzii (strain DSM 13941 / HLO8)).